Reading from the N-terminus, the 94-residue chain is MNMQKMLQQAKALQSKMEKKIKEFEQEEFEFVYQKSITIQIKGNYEIIKMDINKELIDPEDKTMLEEMISEAINEAISAITEEKEKITKGAMPF.

Belongs to the YbaB/EbfC family. As to quaternary structure, homodimer.

The protein localises to the cytoplasm. It is found in the nucleoid. In terms of biological role, binds to DNA and alters its conformation. May be involved in regulation of gene expression, nucleoid organization and DNA protection. This chain is Nucleoid-associated protein MYPE8070, found in Malacoplasma penetrans (strain HF-2) (Mycoplasma penetrans).